Consider the following 59-residue polypeptide: Large ribosomal subunit protein uL30 (59 aa).

It belongs to the universal ribosomal protein uL30 family. As to quaternary structure, part of the 50S ribosomal subunit.

This chain is Large ribosomal subunit protein uL30, found in Desulforamulus reducens (strain ATCC BAA-1160 / DSM 100696 / MI-1) (Desulfotomaculum reducens).